A 160-amino-acid polypeptide reads, in one-letter code: Serine-protein kinase RsbW (160 aa).

Belongs to the anti-sigma-factor family.

It carries out the reaction L-seryl-[protein] + ATP = O-phospho-L-seryl-[protein] + ADP + H(+). The enzyme catalyses L-threonyl-[protein] + ATP = O-phospho-L-threonyl-[protein] + ADP + H(+). Its function is as follows. Negative regulator of sigma-B activity. Phosphorylates and inactivates its specific antagonist protein, RsbV. Upon phosphorylation of RsbV, RsbW is released and binds to sigma-B, thereby blocking its ability to form an RNA polymerase holoenzyme (E-sigma-B). In Bacillus thuringiensis (strain Al Hakam), this protein is Serine-protein kinase RsbW.